Reading from the N-terminus, the 203-residue chain is MGQVVSMVARRANRFNVENRAHRVLEREKPTPAPKFDSNLRDMERTLELDPKFVDKLNMKDSSLDGRLKDVYVTSQDRFIKRVQERQAAEAAADNVEQRPLPLERKTPDDFEYGYLEPNRISPGHCTLRQALKFINDHQLDPESWPAKKIANEYKLKEPLVENILHYFKTFNMYIPDQKYKDTMLTQATQPLLRVKSSSEGNP.

This sequence belongs to the NDUFAF4 family. Together with NdufAF3 associates with mitochondrial complex I assembly intermediates during its biogenesis.

In terms of biological role, involved in the assembly of mitochondrial NADH:ubiquinone oxidoreductase complex (complex I). Together with NdufAF3, involved in biogenesis of complex 1 modules N, Q and P-peripheral, but not the P-distal module. Required for recruitment of the complex I assembly factor Timmdc1 to complex 1 assembly intermediates. The sequence is that of NADH dehydrogenase [ubiquinone] 1 alpha subcomplex assembly factor 4 from Drosophila melanogaster (Fruit fly).